The primary structure comprises 572 residues: MRTSQYLLSTLKETPADAEVISHQLMLRAGMIRKLASGLYTWLPTGVRVLKKVENIVREEMNNAGAIEVSMPVVQPADLWQESGRWEQYGPELLRFVDRGERPFVLGPTHEEVITDLIRNELSSYKQLPLNFYQIQTKFRDEVRPRFGVMRSREFLMKDAYSFHTSQESLQETYDAMYAAYSKIFSRIGLDFRAVQADTGSIGGSASHEFQVLAQSGEDDVVFSDTSDYAANIELAEAIAPKEPRAAATQEMTLVDTPNAKTIAELVEQFNLPIEKTVKTLLVKAVEGSSFPLVALLVRGDHELNEVKAEKLPQVASPLTFATEEEIRAVVKAGPGSLGPVNMPIPVVIDRTVAAMSDFAAGANIDGKHYFGINWDRDVATPEVADIRNVVAGDPSPDGQGTLLIKRGIEVGHIFQLGTKYSEALKASVQGEDGRNQILTMGCYGIGVTRVVAAAIEQNYDERGIVWPDAIAPFQVAILPMNMHKSFRVQELAEKLYSELRAQGIEVLLDDRKERPGVMFADMELIGIPHTIVLGDRNLDNDDIEYKYRRNGEKQLIKTGDIVEYLVKQIKG.

It belongs to the class-II aminoacyl-tRNA synthetase family. ProS type 1 subfamily. In terms of assembly, homodimer.

It is found in the cytoplasm. It carries out the reaction tRNA(Pro) + L-proline + ATP = L-prolyl-tRNA(Pro) + AMP + diphosphate. Its function is as follows. Catalyzes the attachment of proline to tRNA(Pro) in a two-step reaction: proline is first activated by ATP to form Pro-AMP and then transferred to the acceptor end of tRNA(Pro). As ProRS can inadvertently accommodate and process non-cognate amino acids such as alanine and cysteine, to avoid such errors it has two additional distinct editing activities against alanine. One activity is designated as 'pretransfer' editing and involves the tRNA(Pro)-independent hydrolysis of activated Ala-AMP. The other activity is designated 'posttransfer' editing and involves deacylation of mischarged Ala-tRNA(Pro). The misacylated Cys-tRNA(Pro) is not edited by ProRS. This Escherichia coli O139:H28 (strain E24377A / ETEC) protein is Proline--tRNA ligase.